The primary structure comprises 88 residues: UPF0298 protein Bcer98_2635 (88 aa).

The protein belongs to the UPF0298 family.

Its subcellular location is the cytoplasm. In Bacillus cytotoxicus (strain DSM 22905 / CIP 110041 / 391-98 / NVH 391-98), this protein is UPF0298 protein Bcer98_2635.